Here is a 416-residue protein sequence, read N- to C-terminus: MELTMKKVSVIAAAVAATLAAGSAFAVDFNGYFRAGTGISGNGNADQAVNKAGTGRLGNENDNYYEFGFAEELKTGEQTWKVESMIAQGNSGANGWEDGDFNVAQFNVQAKGLLASDQEAVMWAGKRYYQRKDIHITDFYFLNTSGTGGGIENLSVGNQKLSVALVQDGDNTNSSGYIFDARLANIGLWENASLELAMAYNFATEKDSKNEVADDGVLVSAILHQGLSNGFNQTVFQYGTAGYGAQAANFWGAGSYYARGTEAFNDASGFRLLNWGVINLGENWEMGHQLAYLAGSDIGGQFGGDGANKNTYTGKSFDIDQYSVVVRPMYKWNDTMRTVFEAGYNAGEKISNGGLATEDFGNAKFTVAQAWAMGDSFWARPELRVYGTYLLDTENDKAFGDDDTEFVVGIQVEAWW.

The first 26 residues, 1–26, serve as a signal peptide directing secretion; the sequence is MELTMKKVSVIAAAVAATLAAGSAFA.

Belongs to the porin LamB (TC 1.B.3) family. Homotrimer formed of three 18-stranded antiparallel beta-barrels, containing three independent channels.

It is found in the cell outer membrane. The catalysed reaction is beta-maltose(in) = beta-maltose(out). Involved in the transport of maltose and maltodextrins. This chain is Maltoporin, found in Vibrio cholerae serotype O1 (strain ATCC 39541 / Classical Ogawa 395 / O395).